A 362-amino-acid chain; its full sequence is Cobalt-precorrin-5B C(1)-methyltransferase (362 aa).

It belongs to the CbiD family.

It catalyses the reaction Co-precorrin-5B + S-adenosyl-L-methionine = Co-precorrin-6A + S-adenosyl-L-homocysteine. Its pathway is cofactor biosynthesis; adenosylcobalamin biosynthesis; cob(II)yrinate a,c-diamide from sirohydrochlorin (anaerobic route): step 6/10. Catalyzes the methylation of C-1 in cobalt-precorrin-5B to form cobalt-precorrin-6A. The chain is Cobalt-precorrin-5B C(1)-methyltransferase from Synechococcus sp. (strain CC9902).